We begin with the raw amino-acid sequence, 635 residues long: MIKITLKDGKVMEFEEGIKISDIAMKISPALYKKALAAKIDGETVDLMTELHKDSSLEILTFEDEMGKWTLRHTGSHMLAQAVKRLYPEVKLAIGPAIDTGFYYDFEADFTFTPEMLEKIEAEIKKIIKENHKLERFELPREEAIKLMKEKNEDYKVELIEDLPEGEVISFYKQGDFTDLCAGPHVPSTGKVKSVKLLSLAGAYWRGDEKNKMLQRIYGTAFTKKSELDEYLNMIEEAKKRDHRKLGKELDLFSIHEEGPGFPFFHPKGMIVRNILESFWREEHTKAGYQEIRTPLILNEALWHQSGHWDHYKENMYFTNIDDGDYAIKPMNCPGGILVYKNSMHSYRDLPLRLSELGIVHRHELSGALHGLMRVRCFTQDDAHLYMTKEQIKEEIVGIIKLIDKFYKLFGFEYFVELSTRPEDSMGSDEDWEIATNGLREALDSIGKEYRVNEGDGAFYGPKIDFHLKDCIGRTWQCGTIQLDFQMPERFDLSYIGADGEKHRPVMVHRTIYGSVERFIGILIEQYAGAFPTWLAPVQVKLMNITDSQYDYLKKVEEALKENNIRVEIDTRNEKIGYKIREAQLQKVPYMLILGDKEVEAGKVAVRSRKDGDLGAISLEEFIEKIKNEIKNKTN.

Positions 1 to 61 (MIKITLKDGK…HKDSSLEILT (61 aa)) constitute a TGS domain. A catalytic region spans residues 242–532 (DHRKLGKELD…LIEQYAGAFP (291 aa)). Residues Cys-333, His-384, and His-509 each coordinate Zn(2+).

It belongs to the class-II aminoacyl-tRNA synthetase family. As to quaternary structure, homodimer. Requires Zn(2+) as cofactor.

It is found in the cytoplasm. It carries out the reaction tRNA(Thr) + L-threonine + ATP = L-threonyl-tRNA(Thr) + AMP + diphosphate + H(+). In terms of biological role, catalyzes the attachment of threonine to tRNA(Thr) in a two-step reaction: L-threonine is first activated by ATP to form Thr-AMP and then transferred to the acceptor end of tRNA(Thr). Also edits incorrectly charged L-seryl-tRNA(Thr). In Clostridium botulinum (strain Kyoto / Type A2), this protein is Threonine--tRNA ligase.